The following is a 248-amino-acid chain: MNRYYSNNQEITVSLIPRTERAAFLITPTSYGKSVLGAPLLYFPAQVESNSRGLILAGTHGDETASIAGLSCALRSLPAECLKHDVILSMNPDANQLGTRANANQVDLNRAFPTQNWTEHGTVYRWSSHTPVRDVKVKTGDKEQLEPEVDALISLIELRRPKFVVSFHEPLAFVDDPAHSDLAKWLGKQFNLPIVDDVDYETPGSFGTWCNERQLPCITVELPPISADLTIEKHLDAFIALLQHDPDL.

The 243-residue stretch at 3-245 (RYYSNNQEIT…DAFIALLQHD (243 aa)) folds into the Peptidase M14 domain. His60, Glu63, and His168 together coordinate Zn(2+). The active-site Proton donor/acceptor is the Glu221.

It belongs to the peptidase M14 family. In terms of assembly, homodimer. It depends on Zn(2+) as a cofactor.

It is found in the cytoplasm. It catalyses the reaction L-alanyl-gamma-D-glutamyl-meso-2,6-diaminopimelate + H2O = L-alanyl-D-glutamate + meso-2,6-diaminopimelate. It functions in the pathway cell wall degradation; peptidoglycan degradation. Its function is as follows. Involved in muropeptide degradation. Catalyzes the hydrolysis of the gamma-D-glutamyl-diaminopimelic acid (gamma-D-Glu-Dap) amide bond in the murein tripeptide L-alanyl-gamma-D-glutamyl-meso-diaminopimelic acid, leading to the formation of L-Ala-gamma-D-Glu and Dap. Has weak activity with L-Ala-gamma-D-Glu-L-Lys, MurNAc-tripeptide and gamma-D-Glu-meso-Dap. Cannot hydrolyze murein tetrapeptide. This is Murein peptide amidase A from Vibrio campbellii (strain ATCC BAA-1116).